Here is a 156-residue protein sequence, read N- to C-terminus: Endoribonuclease YbeY (156 aa).

Zn(2+) contacts are provided by His-119, His-123, and His-129.

The protein belongs to the endoribonuclease YbeY family. It depends on Zn(2+) as a cofactor.

It is found in the cytoplasm. Its function is as follows. Single strand-specific metallo-endoribonuclease involved in late-stage 70S ribosome quality control and in maturation of the 3' terminus of the 16S rRNA. The polypeptide is Endoribonuclease YbeY (Buchnera aphidicola subsp. Cinara cedri (strain Cc)).